Here is a 486-residue protein sequence, read N- to C-terminus: MTTLMVQGTTSDAGKSTLVTALCRWLTRQGVKVVPFKPQNMALNSAVTADGGEIGRAQAVQAQACFLAPHTDMNPVLLKPNSDTGAQVIIHGRAVTTMNAVAYHGYKEIAMQAVLESHRRLSESYPVIMVEGAGSPAEINLRANDIANMGFAEAVDCPVLLIADINRGGVFAHLVGTLELLSPSEQARVKGFIINRFRGDIALLQPGLDWLEARTGKPVVGVLPYVMDLHLEAEDGLDQRQTDKVEQVLNVVVPVLPRISNHTDFDPLRLHPQVNLQFIGPGQPIPPADLIILPGSKSVRSDLNYLRANGWETAIDRHLRYGGKLMGICGGLQMLGEHLHDPLGLEGAAGSSAGLGLLAMSTVLETEKQLRNVRGRLTLEDAEVSGYEIHAGVTTGAALEQAAVQLDDGRCDGAQSADGQILGTYLHGLFESPAACSALLRWAGLENVQSVDYHALRERDIERLADLVEKHLDGTLLRELCGLEAT.

A GATase cobBQ-type domain is found at 248 to 435 (VLNVVVPVLP…LHGLFESPAA (188 aa)). Catalysis depends on C329, which acts as the Nucleophile. H427 is an active-site residue.

Belongs to the CobB/CobQ family. CobQ subfamily.

It participates in cofactor biosynthesis; adenosylcobalamin biosynthesis. Functionally, catalyzes amidations at positions B, D, E, and G on adenosylcobyrinic A,C-diamide. NH(2) groups are provided by glutamine, and one molecule of ATP is hydrogenolyzed for each amidation. This is Cobyric acid synthase from Pseudomonas syringae pv. tomato (strain ATCC BAA-871 / DC3000).